Consider the following 371-residue polypeptide: MASTARKTFEINNNVQVVDPSAAIFQYSREEEKLLDDEAPWRTDPHYFHTVKISAVALIKMVTHARSGGIYEIMGIMYGKVRDGTFWIMDVAALPVQGTETRVNAGNEAMEYMVNFQTANAEAGKGELLRGWYHSHPGYGCWLSGIDVNTQLNNQKFNDPYLAVVIDPNRTVSAGKVEIGAFRTYPEGYTPPATGNSQYQSIPMDKIEDFGVHANAYYPLKVEIYKSKLDEKMLDLLWNKYWVATLSSNSLVSNLEYSTSQVQDLNAKLRAASQSISNSSSKLKLKPTQPTTKGKETTEGSDKKLKKGEKEFSGVEEEETPLNKVTQESSRITSEAENGIISQLLKEKLFNTPLTQSVDDKSAQATVQGRY.

The MPN domain maps to V51 to G188. 3 residues coordinate Zn(2+): H134, H136, and D147. A JAMM motif motif is present at residues H134 to D147. The span at N278–T292 shows a compositional bias: low complexity. Disordered stretches follow at residues N278–T333 and T352–Y371. A compositionally biased stretch (basic and acidic residues) spans K293–S313. Residues N323–T333 are compositionally biased toward polar residues.

It belongs to the peptidase M67A family. CSN5 subfamily. As to quaternary structure, component of the COP9 signalosome (CSN) complex.

Its subcellular location is the cytoplasm. It localises to the nucleus. Functionally, catalytic Component of the COP9 signalosome (CSN) complex that acts as an regulator of the ubiquitin (Ubl) conjugation pathway by mediating the deneddylation of the cullin subunit of SCF-type E3 ubiquitin-protein ligase complexes. This Cryptococcus neoformans var. neoformans serotype D (strain B-3501A) (Filobasidiella neoformans) protein is COP9 signalosome complex subunit 5 (RRI1).